A 181-amino-acid polypeptide reads, in one-letter code: MSIYGDYIKSVIRTVPDWPQPGVNFRDITPVLQNSAAFRKLIDSFVHRYQELNLDAIAAIDARGFIIGAPVAYELGCSFVPVRKKGKLPFKTISETYTLEYGASTVELHSDAFREGDRILVMDDLIATGGTMLAAASLIQRSGGQVVETATIIDLPELGGAQKIRDAGHGVFAVCTFTENE.

This sequence belongs to the purine/pyrimidine phosphoribosyltransferase family. As to quaternary structure, homodimer.

It is found in the cytoplasm. The enzyme catalyses AMP + diphosphate = 5-phospho-alpha-D-ribose 1-diphosphate + adenine. The protein operates within purine metabolism; AMP biosynthesis via salvage pathway; AMP from adenine: step 1/1. Its function is as follows. Catalyzes a salvage reaction resulting in the formation of AMP, that is energically less costly than de novo synthesis. This Chromohalobacter salexigens (strain ATCC BAA-138 / DSM 3043 / CIP 106854 / NCIMB 13768 / 1H11) protein is Adenine phosphoribosyltransferase.